The primary structure comprises 666 residues: tRNA 5-methylaminomethyl-2-thiouridine biosynthesis bifunctional protein MnmC (666 aa).

Positions 1-245 are tRNA (mnm(5)s(2)U34)-methyltransferase; sequence MKQYAIQPAT…KREMLCGVME (245 aa). The segment at 270–666 is FAD-dependent cmnm(5)s(2)U34 oxidoreductase; the sequence is IGGGIASALL…RKLLKGKAVK (397 aa).

It in the N-terminal section; belongs to the methyltransferase superfamily. tRNA (mnm(5)s(2)U34)-methyltransferase family. In the C-terminal section; belongs to the DAO family. It depends on FAD as a cofactor.

It localises to the cytoplasm. It carries out the reaction 5-aminomethyl-2-thiouridine(34) in tRNA + S-adenosyl-L-methionine = 5-methylaminomethyl-2-thiouridine(34) in tRNA + S-adenosyl-L-homocysteine + H(+). In terms of biological role, catalyzes the last two steps in the biosynthesis of 5-methylaminomethyl-2-thiouridine (mnm(5)s(2)U) at the wobble position (U34) in tRNA. Catalyzes the FAD-dependent demodification of cmnm(5)s(2)U34 to nm(5)s(2)U34, followed by the transfer of a methyl group from S-adenosyl-L-methionine to nm(5)s(2)U34, to form mnm(5)s(2)U34. The chain is tRNA 5-methylaminomethyl-2-thiouridine biosynthesis bifunctional protein MnmC from Salmonella paratyphi B (strain ATCC BAA-1250 / SPB7).